The chain runs to 200 residues: Snake venom metalloproteinase hemorrhagic factor 2 (200 aa).

The 197-residue stretch at K4–P200 folds into the Peptidase M12B domain. E7 is a Ca(2+) binding site. N70 carries N-linked (GlcNAc...) asparagine glycosylation. D91 is a Ca(2+) binding site. 3 cysteine pairs are disulfide-bonded: C115-C195, C155-C179, and C157-C162. H140 is a binding site for Zn(2+). E141 is an active-site residue. Residues H144 and H150 each contribute to the Zn(2+) site. Residues C195 and N198 each contribute to the Ca(2+) site.

The protein belongs to the venom metalloproteinase (M12B) family. P-I subfamily. Monomer. Zn(2+) serves as cofactor. In terms of tissue distribution, expressed by the venom gland.

It is found in the secreted. Snake venom zinc metalloproteinase that induces weak hemorrhage and mild myonecrosis. Shows mild myotoxicity by killing myocytes. Also induces edema in the mouse footpad at doses where hemorrhage is absent. In vitro, degrades laminin, fibronectin, and type IV collagen, suggesting this toxin play a role in local tissue damage by degrading extracellular matrix, and possibly by degrading muscle extracellular matrix. Hemorrhage is not due to cytotoxicity towards endothelial cells in culture, and may only play a minor role in local bleeding characteristic of L.muta envenomations. Also induces the synthesis of several endogenous matrix metalloproteinases, which in turn, may participate in extracellular matrix degradation. In Lachesis muta muta (Bushmaster), this protein is Snake venom metalloproteinase hemorrhagic factor 2.